Reading from the N-terminus, the 181-residue chain is MATSEEILEQTIKSTIRDIVDFPEPGIIFKDITPLLKDPQLCKAIVQSITDQLRPLQPDALACLDSRGFWFGLSIAMELGIPMIPIRKKGKLPYETVYEEYALEYGTNTIEMHTDAVQPGCRVAIHDDILATGGTAEATSKLIKKAKGEIIAYSFLIELDFLKGKDKLAPYCTTIQSLINY.

The protein belongs to the purine/pyrimidine phosphoribosyltransferase family. In terms of assembly, homodimer.

It is found in the cytoplasm. It carries out the reaction AMP + diphosphate = 5-phospho-alpha-D-ribose 1-diphosphate + adenine. Its pathway is purine metabolism; AMP biosynthesis via salvage pathway; AMP from adenine: step 1/1. Its function is as follows. Catalyzes a salvage reaction resulting in the formation of AMP, that is energically less costly than de novo synthesis. The sequence is that of Adenine phosphoribosyltransferase from Cytophaga hutchinsonii (strain ATCC 33406 / DSM 1761 / CIP 103989 / NBRC 15051 / NCIMB 9469 / D465).